We begin with the raw amino-acid sequence, 370 residues long: 4-hydroxy-3-methylbut-2-en-1-yl diphosphate synthase (flavodoxin) (370 aa).

[4Fe-4S] cluster-binding residues include Cys270, Cys273, Cys305, and Glu312.

The protein belongs to the IspG family. It depends on [4Fe-4S] cluster as a cofactor.

The enzyme catalyses (2E)-4-hydroxy-3-methylbut-2-enyl diphosphate + oxidized [flavodoxin] + H2O + 2 H(+) = 2-C-methyl-D-erythritol 2,4-cyclic diphosphate + reduced [flavodoxin]. It participates in isoprenoid biosynthesis; isopentenyl diphosphate biosynthesis via DXP pathway; isopentenyl diphosphate from 1-deoxy-D-xylulose 5-phosphate: step 5/6. Converts 2C-methyl-D-erythritol 2,4-cyclodiphosphate (ME-2,4cPP) into 1-hydroxy-2-methyl-2-(E)-butenyl 4-diphosphate. This is 4-hydroxy-3-methylbut-2-en-1-yl diphosphate synthase (flavodoxin) from Hahella chejuensis (strain KCTC 2396).